We begin with the raw amino-acid sequence, 137 residues long: Protein ApaG (137 aa).

Residues 2 to 126 enclose the ApaG domain; sequence PKYQFQVQVQ…FVLEAFSPGQ (125 aa).

This is Protein ApaG from Acidovorax sp. (strain JS42).